The primary structure comprises 417 residues: Carboxypeptidase B (417 aa).

A signal peptide spans M1–H16. The propeptide at H17–R110 is activation peptide. One can recognise a Peptidase M14 domain in the interval K118–V412. C173 and C186 are disulfide-bonded. Residues H176 and E179 each coordinate Zn(2+). Residues H176–E179, R234, and N251–R252 contribute to the substrate site. Cystine bridges form between C245–C268 and C259–C273. Position 304 (H304) interacts with Zn(2+). Substrate contacts are provided by residues S305–Y306 and Y356. E378 (proton donor/acceptor) is an active-site residue.

It belongs to the peptidase M14 family. Zn(2+) is required as a cofactor.

It localises to the secreted. Its subcellular location is the zymogen granule lumen. The enzyme catalyses Preferential release of a C-terminal lysine or arginine amino acid.. The protein is Carboxypeptidase B (CPB1) of Bos taurus (Bovine).